Here is a 264-residue protein sequence, read N- to C-terminus: Small ribosomal subunit protein eS1 (264 aa).

Lys34 bears the N6-acetyllysine; alternate mark. Residue Lys34 forms a Glycyl lysine isopeptide (Lys-Gly) (interchain with G-Cter in SUMO2); alternate linkage. Position 56 is an N6-acetyllysine (Lys56). Tyr155 is subject to ADP-ribosyltyrosine. Residues 232-264 (HGEGGSSGKTTGDETGAKVERADGYEPPVQESV) form a disordered region. Ser237 is subject to Phosphoserine. The segment covering 242–255 (TGDETGAKVERADG) has biased composition (basic and acidic residues). Position 249 is an N6-acetyllysine; alternate (Lys249). Lys249 is covalently cross-linked (Glycyl lysine isopeptide (Lys-Gly) (interchain with G-Cter in SUMO2); alternate). Tyr256 is modified (phosphotyrosine). Ser263 bears the Phosphoserine mark.

This sequence belongs to the eukaryotic ribosomal protein eS1 family. Component of the small ribosomal subunit. Mature ribosomes consist of a small (40S) and a large (60S) subunit. The 40S subunit contains about 33 different proteins and 1 molecule of RNA (18S). The 60S subunit contains about 49 different proteins and 3 molecules of RNA (28S, 5.8S and 5S). Identified in a IGF2BP1-dependent mRNP granule complex containing untranslated mRNAs. Binds with high affinity to IPO4. Interacts with DDIT3. Part of the small subunit (SSU) processome, composed of more than 70 proteins and the RNA chaperone small nucleolar RNA (snoRNA) U3. The protein designated S3b has the same amino acid sequence as S3a except that it lacks the C-terminal 12 residues. It is probable that S3a is converted by proteolysis, either physiologically or fortuitously, to S3b. In terms of processing, ADP-ribosylated at Tyr-155 by PARP1 in presence of HPF1.

It is found in the cytoplasm. Its subcellular location is the nucleus. It localises to the nucleolus. Its function is as follows. Component of the small ribosomal subunit. The ribosome is a large ribonucleoprotein complex responsible for the synthesis of proteins in the cell. Part of the small subunit (SSU) processome, first precursor of the small eukaryotic ribosomal subunit. During the assembly of the SSU processome in the nucleolus, many ribosome biogenesis factors, an RNA chaperone and ribosomal proteins associate with the nascent pre-rRNA and work in concert to generate RNA folding, modifications, rearrangements and cleavage as well as targeted degradation of pre-ribosomal RNA by the RNA exosome. May play a role during erythropoiesis through regulation of transcription factor DDIT3. In Rattus norvegicus (Rat), this protein is Small ribosomal subunit protein eS1 (Rps3a).